The primary structure comprises 455 residues: Angiopoietin-related protein 3 (455 aa).

A signal peptide spans 1–16 (MHTIKLFLFVVPLVIA). Residues 17–165 (SRVDPDLSSF…QEHPEVTSLK (149 aa)) are sufficient to inhibit LPL lipase activity. The segment at 17 to 207 (SRVDPDLSSF…EIEKQLRKTG (191 aa)) is sufficient to inhibit LIPG/EL phospholipase activity. Positions 32 to 56 (EPKSRFAMLDDVKILANGLLQLGHG) are required for inhibition of LPL lipase activity. The stretch at 85–206 (LSLRTNEIKE…KEIEKQLRKT (122 aa)) forms a coiled coil. Asparagine 115 carries an N-linked (GlcNAc...) asparagine glycan. The interval 202–242 (QLRKTGIQEPSENSLSSKSRAPRTTPPLQLNETENTEQDDL) is disordered. Polar residues predominate over residues 209 to 220 (QEPSENSLSSKS). O-linked (GlcNAc) threonine glycosylation is present at threonine 226. Residue asparagine 232 is glycosylated (N-linked (GlcNAc...) asparagine). The Fibrinogen C-terminal domain maps to 237-455 (TEQDDLPADC…SSKMMLQPTT (219 aa)). Cysteine 246 and cysteine 274 are disulfide-bonded. Asparagine 296 and asparagine 357 each carry an N-linked (GlcNAc...) asparagine glycan. A disulfide bond links cysteine 394 and cysteine 408.

As to quaternary structure, interacts with ANGPTL8. Interacts with ITGB3. Post-translationally, in part proteolytically cleaved by proprotein convertases; proposed to be involved in activation. In primary hepatocytes is intracellularily predominantly processed by FURIN and extracellularily by FURIN and PCSK6/PACE4. In 18.5 dpc embryos 75% of protein is found to be processed compared to 25 % in adults. Predominantly expressed in liver, weakly expressed in kidney and lung. Expressed in podocytes (at protein level). Expressed in hypothalamic neurons (at protein level). Expressed in bone marrow sinusoidal endothelial cells (at protein level).

It localises to the secreted. Its subcellular location is the cell projection. It is found in the lamellipodium. In terms of biological role, acts in part as a hepatokine that is involved in regulation of lipid and glucose metabolism. Proposed to play a role in the trafficking of energy substrates to either storage or oxidative tissues in response to food intake. Has a stimulatory effect on plasma triglycerides (TG), which is achieved by suppressing plasma TG clearance via inhibition of LPL activity; the function seems to be specific for the feeding conditions. The inhibition of LPL activity appears to be an indirect mechanism involving recruitment of proprotein convertases PCSK6 and FURIN to LPL leading to cleavage and dissociation of LPL from the cell surface; the function does not require ANGPTL3 proteolytic cleavage but seems to be mediated by the N-terminal domain, and is not inhibited by GPIHBP1. Can inhibit endothelial lipase, causing increased plasma levels of high density lipoprotein (HDL) cholesterol and phospholipids; the cleaved N-terminal domain is more efficient than the uncleaved proprotein. Can bind to adipocytes to activate lipolysis, releasing free fatty acids and glycerol. Suppresses LPL specifically in oxidative tissues which is required to route very low density lipoprotein (VLDL)-TG to white adipose tissue (WAT) for storage in response to food; the function may involve cooperation with circulating, liver-derived ANGPTL8 and ANGPTL4 expression in WAT. Contributes to lower plasma levels of low density lipoprotein (LDL)-cholesterol by a mechanism that is independent of the canonical pathway implicating APOE and LDLR. May stimulate hypothalamic LPL activity. Functionally, involved in angiogenesis. Binds to endothelial cells via integrin alpha-V/beta-3 (ITGAV:ITGB3), activates FAK, MAPK and Akt signaling pathways and induces cell adhesion and cell migration. May increase the motility of podocytes. Secreted from podocytes, may modulate properties of glomerular endothelial cells involving integrin alpha-V/beta-3 and Akt signaling. May induce actin filament rearrangements in podocytes implicating integrin alpha-V/beta-3 and Rac1 activation. Binds to hematopoietic stem cells (HSC) and is involved in the regulation of HSC activity probably implicating down-regulation of IKZF1/IKAROS. The chain is Angiopoietin-related protein 3 (Angptl3) from Mus musculus (Mouse).